The chain runs to 31 residues: Dermaseptin-DI3 (31 aa).

Belongs to the frog skin active peptide (FSAP) family. Dermaseptin subfamily. In terms of tissue distribution, expressed by the skin glands.

It localises to the secreted. Functionally, antibacterial activity against Gram-positive bacteria S.aureus and E.faecalis, and Gram-negative bacteria P.aeruginosa and E.coli. The chain is Dermaseptin-DI3 from Phyllomedusa distincta (Monkey frog).